A 378-amino-acid chain; its full sequence is Dihydroorotate dehydrogenase (quinone) (378 aa).

Residues 77 to 81 and Thr-101 each bind FMN; that span reads AGFDK. Position 81 (Lys-81) interacts with substrate. Residue 126–130 coordinates substrate; it reads NRMGF. 2 residues coordinate FMN: Asn-158 and Asn-191. Asn-191 lines the substrate pocket. Ser-194 serves as the catalytic Nucleophile. Asn-196 serves as a coordination point for substrate. Lys-229 and Thr-257 together coordinate FMN. 258–259 provides a ligand contact to substrate; it reads NT. Residues Gly-287, Gly-316, and 337 to 338 each bind FMN; that span reads YT.

Belongs to the dihydroorotate dehydrogenase family. Type 2 subfamily. In terms of assembly, monomer. FMN is required as a cofactor.

The protein localises to the cell membrane. The enzyme catalyses (S)-dihydroorotate + a quinone = orotate + a quinol. It functions in the pathway pyrimidine metabolism; UMP biosynthesis via de novo pathway; orotate from (S)-dihydroorotate (quinone route): step 1/1. Functionally, catalyzes the conversion of dihydroorotate to orotate with quinone as electron acceptor. This is Dihydroorotate dehydrogenase (quinone) from Synechococcus sp. (strain ATCC 27144 / PCC 6301 / SAUG 1402/1) (Anacystis nidulans).